A 223-amino-acid polypeptide reads, in one-letter code: UPF0502 protein Shew185_1758 (223 aa).

This sequence belongs to the UPF0502 family.

This is UPF0502 protein Shew185_1758 from Shewanella baltica (strain OS185).